Consider the following 20-residue polypeptide: Cytosol aminopeptidase (20 aa).

Residue Ser-6 is modified to Phosphoserine.

Belongs to the peptidase M17 family. As to quaternary structure, homohexamer. Requires Zn(2+) as cofactor. The cofactor is Mn(2+).

Its subcellular location is the cytoplasm. The catalysed reaction is Release of an N-terminal amino acid, Xaa-|-Yaa-, in which Xaa is preferably Leu, but may be other amino acids including Pro although not Arg or Lys, and Yaa may be Pro. Amino acid amides and methyl esters are also readily hydrolyzed, but rates on arylamides are exceedingly low.. It carries out the reaction an S-substituted L-cysteinylglycine + H2O = an S-substituted L-cysteine + glycine. It catalyses the reaction L-cysteinylglycine + H2O = L-cysteine + glycine. The enzyme catalyses S-benzyl-L-cysteinylglycine + H2O = S-benzyl-L-cysteine + glycine. The catalysed reaction is Release of N-terminal proline from a peptide.. In terms of biological role, cytosolic metallopeptidase that catalyzes the removal of unsubstituted N-terminal hydrophobic amino acids from various peptides. The presence of Zn(2+) ions is essential for the peptidase activity, and the association with other cofactors can modulate the substrate spectificity of the enzyme. For instance, in the presence of Mn(2+), it displays a specific Cys-Gly hydrolyzing activity of Cys-Gly-S-conjugates. Involved in the metabolism of glutathione and in the degradation of glutathione S-conjugates, which may play a role in the control of the cell redox status. The sequence is that of Cytosol aminopeptidase from Mesocricetus auratus (Golden hamster).